The sequence spans 249 residues: tRNA (guanine-N(1)-)-methyltransferase (249 aa).

Residues G112 and 132 to 137 each bind S-adenosyl-L-methionine; that span reads LGDFVL.

It belongs to the RNA methyltransferase TrmD family. As to quaternary structure, homodimer.

Its subcellular location is the cytoplasm. The enzyme catalyses guanosine(37) in tRNA + S-adenosyl-L-methionine = N(1)-methylguanosine(37) in tRNA + S-adenosyl-L-homocysteine + H(+). Its function is as follows. Specifically methylates guanosine-37 in various tRNAs. This is tRNA (guanine-N(1)-)-methyltransferase from Citrifermentans bemidjiense (strain ATCC BAA-1014 / DSM 16622 / JCM 12645 / Bem) (Geobacter bemidjiensis).